The sequence spans 595 residues: NADH-quinone oxidoreductase subunit C/D (595 aa).

An NADH dehydrogenase I subunit C region spans residues 1 to 186 (MAETDIAMPE…TPYMQNQAKQ (186 aa)). The segment at 210 to 595 (DFMFLNLGPN…IDVVMADVDR (386 aa)) is NADH dehydrogenase I subunit D.

This sequence in the N-terminal section; belongs to the complex I 30 kDa subunit family. The protein in the C-terminal section; belongs to the complex I 49 kDa subunit family. In terms of assembly, NDH-1 is composed of 13 different subunits. Subunits NuoB, CD, E, F, and G constitute the peripheral sector of the complex.

The protein resides in the cell inner membrane. It carries out the reaction a quinone + NADH + 5 H(+)(in) = a quinol + NAD(+) + 4 H(+)(out). In terms of biological role, NDH-1 shuttles electrons from NADH, via FMN and iron-sulfur (Fe-S) centers, to quinones in the respiratory chain. The immediate electron acceptor for the enzyme in this species is believed to be ubiquinone. Couples the redox reaction to proton translocation (for every two electrons transferred, four hydrogen ions are translocated across the cytoplasmic membrane), and thus conserves the redox energy in a proton gradient. In Acinetobacter baylyi (strain ATCC 33305 / BD413 / ADP1), this protein is NADH-quinone oxidoreductase subunit C/D.